Here is a 219-residue protein sequence, read N- to C-terminus: 2-hydroxy-3-keto-5-methylthiopentenyl-1-phosphate phosphatase (219 aa).

The protein belongs to the HAD-like hydrolase superfamily. MtnX family.

It carries out the reaction 2-hydroxy-5-methylsulfanyl-3-oxopent-1-enyl phosphate + H2O = 1,2-dihydroxy-5-(methylsulfanyl)pent-1-en-3-one + phosphate. The protein operates within amino-acid biosynthesis; L-methionine biosynthesis via salvage pathway; L-methionine from S-methyl-5-thio-alpha-D-ribose 1-phosphate: step 4/6. In terms of biological role, dephosphorylates 2-hydroxy-3-keto-5-methylthiopentenyl-1-phosphate (HK-MTPenyl-1-P) yielding 1,2-dihydroxy-3-keto-5-methylthiopentene (DHK-MTPene). The sequence is that of 2-hydroxy-3-keto-5-methylthiopentenyl-1-phosphate phosphatase from Exiguobacterium sibiricum (strain DSM 17290 / CCUG 55495 / CIP 109462 / JCM 13490 / 255-15).